We begin with the raw amino-acid sequence, 352 residues long: Spermidine/putrescine import ATP-binding protein PotA (352 aa).

An ABC transporter domain is found at 7–237; sequence IRLENVTKSF…PVNAFVADFI (231 aa). Position 39–46 (39–46) interacts with ATP; sequence GPSGCGKT.

Belongs to the ABC transporter superfamily. Spermidine/putrescine importer (TC 3.A.1.11.1) family. In terms of assembly, the complex is composed of two ATP-binding proteins (PotA), two transmembrane proteins (PotB and PotC) and a solute-binding protein (PotD).

It is found in the cell membrane. The enzyme catalyses ATP + H2O + polyamine-[polyamine-binding protein]Side 1 = ADP + phosphate + polyamineSide 2 + [polyamine-binding protein]Side 1.. Part of the ABC transporter complex PotABCD involved in spermidine/putrescine import. Responsible for energy coupling to the transport system. The polypeptide is Spermidine/putrescine import ATP-binding protein PotA (Acetivibrio thermocellus (strain ATCC 27405 / DSM 1237 / JCM 9322 / NBRC 103400 / NCIMB 10682 / NRRL B-4536 / VPI 7372) (Clostridium thermocellum)).